The following is a 62-amino-acid chain: Alpha-conotoxin Vt1.27 (62 aa).

The signal sequence occupies residues methionine 1–serine 21. A propeptide spanning residues phenylalanine 22 to arginine 40 is cleaved from the precursor. 2 cysteine pairs are disulfide-bonded: cysteine 46–cysteine 52 and cysteine 47–cysteine 61.

The protein belongs to the conotoxin A superfamily. As to expression, expressed by the venom duct.

It is found in the secreted. Its function is as follows. The short (45-61) amidated synthetic peptide inhibits the rat neuronal alpha-3-beta-2/CHRNA3-CHRNB2 nicotinic acetylcholine receptor (nAChR) (IC(50)=1.16 uM). It also inhibits Cav2.2/CACNA1C voltage-gated calcium channel (IC(50)=398 nM). In vivo, when tested in rat pain models, this short amidated peptide increases the pain threshold. This chain is Alpha-conotoxin Vt1.27, found in Conus planorbis (Planorbis cone).